We begin with the raw amino-acid sequence, 1382 residues long: Hepatocyte growth factor receptor (1382 aa).

Residues 1 to 24 (MRAPAVLAPGILVLLFTLVQRSCG) form the signal peptide. Topologically, residues 25-933 (ECKEALVKSE…VIVQPDQNFT (909 aa)) are extracellular. Residues 27–516 (KEALVKSEMN…TGKKITKIPL (490 aa)) enclose the Sema domain. Asn45 is a glycosylation site (N-linked (GlcNAc...) asparagine). Disulfide bonds link Cys95/Cys101, Cys98/Cys160, Cys133/Cys141, and Cys173/Cys176. Asn106 is a glycosylation site (N-linked (GlcNAc...) asparagine). N-linked (GlcNAc...) asparagine glycans are attached at residues Asn203 and Asn359. 2 disulfides stabilise this stretch: Cys299-Cys364 and Cys386-Cys398. Asn400 and Asn406 each carry an N-linked (GlcNAc...) asparagine glycan. 4 disulfides stabilise this stretch: Cys521–Cys539, Cys527–Cys562, Cys530–Cys546, and Cys542–Cys552. 3 consecutive IPT/TIG domains span residues 564–656 (PTIY…FSYV), 658–740 (PIIT…FSYQ), and 743–837 (PIVY…LIYV). Residue Thr583 is glycosylated (O-linked (Man) threonine). Asn608 and Asn636 each carry an N-linked (GlcNAc...) asparagine glycan. Thr677 and Thr762 each carry an O-linked (Man) threonine glycan. Asn786, Asn880, and Asn931 each carry an N-linked (GlcNAc...) asparagine glycan. A helical transmembrane segment spans residues 934–956 (GLIVGVISISLIVLLLLGLFLWL). The Cytoplasmic segment spans residues 957–1382 (KRRKQIKDLG…QDIIDGEGDT (426 aa)). At Ser967 the chain carries Phosphoserine. Thr978 is subject to Phosphothreonine. Ser991, Ser998, and Ser1001 each carry phosphoserine. Residue Tyr1004 is modified to Phosphotyrosine. In terms of domain architecture, Protein kinase spans 1079–1346 (VHFNEVIGRG…RISAIFSTFI (268 aa)). Residues 1085–1093 (IGRGHFGCV) and Lys1111 each bind ATP. Catalysis depends on Asp1205, which acts as the Proton acceptor. Residues 1213–1382 (LDEKFTVKVA…QDIIDGEGDT (170 aa)) form an interaction with RANBP9 region. Phosphotyrosine is present on Tyr1231. Residues Tyr1235 and Tyr1236 each carry the phosphotyrosine; by autocatalysis modification. A Phosphothreonine modification is found at Thr1290. The interaction with MUC20 stretch occupies residues 1321–1360 (WHPKAELRPSFSELVSRISAIFSTFIGEHYVHVNATYVNV). Residues Tyr1350 and Tyr1357 each carry the phosphotyrosine; by autocatalysis modification. Position 1366 is a phosphotyrosine (Tyr1366).

It belongs to the protein kinase superfamily. Tyr protein kinase family. Heterodimer made of an alpha chain (50 kDa) and a beta chain (145 kDa) which are disulfide linked. Binds PLXNB1. Interacts when phosphorylated with downstream effectors including STAT3, PIK3R1, SRC, PCLG1, GRB2 and GAB1. Interacts with SPSB1, SPSB2 and SPSB4. Interacts with INPP5D/SHIP1. When phosphorylated at Tyr-1357, interacts with INPPL1/SHIP2. Interacts with RANBP9 and RANBP10, as well as SPSB1, SPSB2, SPSB3 and SPSB4. SPSB1 binding occurs in the presence and in the absence of HGF, however HGF treatment has a positive effect on this interaction. Interacts with MUC20; prevents interaction with GRB2 and suppresses hepatocyte growth factor-induced cell proliferation. Interacts with GRB10. Interacts with PTPN1 and PTPN2. Interacts with HSP90AA1 and HSP90AB1; the interaction suppresses MET kinase activity. Interacts with tensin TNS3. Interacts (when phosphorylated) with tensin TNS4 (via SH2 domain); the interaction increases MET protein stability by inhibiting MET endocytosis and subsequent lysosomal degradation. Autophosphorylated in response to ligand binding on Tyr-1235 and Tyr-1236 in the kinase domain leading to further phosphorylation of Tyr-1350 and Tyr-1357 in the C-terminal multifunctional docking site. Dephosphorylated by PTPRJ at Tyr-1350 and Tyr-1366. Dephosphorylated by PTPN1 and PTPN2. In terms of processing, ubiquitinated. Ubiquitination by CBL regulates the receptor stability and activity through proteasomal degradation. Post-translationally, O-mannosylation of IPT/TIG domains by TMEM260 is required for protein maturation. O-mannosylated residues are composed of single mannose glycans that are not elongated or modified.

It localises to the membrane. The enzyme catalyses L-tyrosyl-[protein] + ATP = O-phospho-L-tyrosyl-[protein] + ADP + H(+). With respect to regulation, in its inactive state, the C-terminal tail interacts with the catalytic domain and inhibits the kinase activity. Upon ligand binding, the C-terminal tail is displaced and becomes phosphorylated, thus increasing the kinase activity. Receptor tyrosine kinase that transduces signals from the extracellular matrix into the cytoplasm by binding to hepatocyte growth factor/HGF ligand. Regulates many physiological processes including proliferation, scattering, morphogenesis and survival. Ligand binding at the cell surface induces autophosphorylation of MET on its intracellular domain that provides docking sites for downstream signaling molecules. Following activation by ligand, interacts with the PI3-kinase subunit PIK3R1, PLCG1, SRC, GRB2, STAT3 or the adapter GAB1. Recruitment of these downstream effectors by MET leads to the activation of several signaling cascades including the RAS-ERK, PI3 kinase-AKT, or PLCgamma-PKC. The RAS-ERK activation is associated with the morphogenetic effects while PI3K/AKT coordinates prosurvival effects. During embryonic development, MET signaling plays a role in gastrulation, development and migration of muscles and neuronal precursors, angiogenesis and kidney formation. In adults, participates in wound healing as well as organ regeneration and tissue remodeling. Also promotes differentiation and proliferation of hematopoietic cells. The chain is Hepatocyte growth factor receptor (MET) from Mustela putorius furo (European domestic ferret).